Consider the following 146-residue polypeptide: Hemoglobin subunit beta (146 aa).

The 145-residue stretch at His2–His146 folds into the Globin domain. The heme b site is built by His63 and His92.

The protein belongs to the globin family. As to quaternary structure, heterotetramer of two alpha chains and two beta chains. In terms of tissue distribution, red blood cells.

Functionally, involved in oxygen transport from the lung to the various peripheral tissues. The protein is Hemoglobin subunit beta (HBB) of Anser indicus (Bar-headed goose).